Here is a 739-residue protein sequence, read N- to C-terminus: Phosphoribosylformylglycinamidine synthase subunit PurL (739 aa).

Histidine 53 is a catalytic residue. ATP contacts are provided by tyrosine 56 and lysine 95. Glutamate 97 contributes to the Mg(2+) binding site. Substrate-binding positions include 98-101 (SHNH) and arginine 120. The Proton acceptor role is filled by histidine 99. Aspartate 121 lines the Mg(2+) pocket. Substrate is bound at residue glutamine 244. Position 274 (aspartate 274) interacts with Mg(2+). 318–320 (ESQ) serves as a coordination point for substrate. Positions 501 and 538 each coordinate ATP. Asparagine 539 provides a ligand contact to Mg(2+). Serine 541 is a binding site for substrate.

The protein belongs to the FGAMS family. Monomer. Part of the FGAM synthase complex composed of 1 PurL, 1 PurQ and 2 PurS subunits.

Its subcellular location is the cytoplasm. It catalyses the reaction N(2)-formyl-N(1)-(5-phospho-beta-D-ribosyl)glycinamide + L-glutamine + ATP + H2O = 2-formamido-N(1)-(5-O-phospho-beta-D-ribosyl)acetamidine + L-glutamate + ADP + phosphate + H(+). It functions in the pathway purine metabolism; IMP biosynthesis via de novo pathway; 5-amino-1-(5-phospho-D-ribosyl)imidazole from N(2)-formyl-N(1)-(5-phospho-D-ribosyl)glycinamide: step 1/2. Its function is as follows. Part of the phosphoribosylformylglycinamidine synthase complex involved in the purines biosynthetic pathway. Catalyzes the ATP-dependent conversion of formylglycinamide ribonucleotide (FGAR) and glutamine to yield formylglycinamidine ribonucleotide (FGAM) and glutamate. The FGAM synthase complex is composed of three subunits. PurQ produces an ammonia molecule by converting glutamine to glutamate. PurL transfers the ammonia molecule to FGAR to form FGAM in an ATP-dependent manner. PurS interacts with PurQ and PurL and is thought to assist in the transfer of the ammonia molecule from PurQ to PurL. The chain is Phosphoribosylformylglycinamidine synthase subunit PurL from Listeria monocytogenes serotype 4b (strain F2365).